We begin with the raw amino-acid sequence, 337 residues long: MVEINLRELKKYANPFFLTIRKDKILVNNKRMARLSRTKMDKIEEEFGIPVIYSKTYEYVSTKVGRFINKHKIIAPRDIVIVGLSGGKDSLLLLHLLEVYRRKYGIKLIAVTVDVNIGGIRPWKEDTEGVKLIKHHCEMLNVPHIILKNDLDVVELSEILTKHSKGMEFSPCFSCSVIKRHLLGKLAKEIAENENIPYEKVKLAYGHNLDDNSDTILANIFKGERLKFMRPLTRFKYNEVDYQSFKIPLEECIIIRPMLPILERDIIKALEECGIEYYKDKDMCPYSRDRGDSVRRRCHEILEKLEEEIPNIREMVVSSALKTVEYYSKNPYGEDNL.

G83 serves as a coordination point for ATP. C172 and C175 together coordinate [4Fe-4S] cluster. Positions 179 and 206 each coordinate ATP. [4Fe-4S] cluster is bound at residue C284.

Belongs to the TtcA family. Requires [4Fe-4S] cluster as cofactor. Mg(2+) is required as a cofactor.

In Methanocaldococcus jannaschii (strain ATCC 43067 / DSM 2661 / JAL-1 / JCM 10045 / NBRC 100440) (Methanococcus jannaschii), this protein is Probable sulfurtransferase.